A 294-amino-acid polypeptide reads, in one-letter code: Acetyl-coenzyme A carboxylase carboxyl transferase subunit beta (294 aa).

In terms of domain architecture, CoA carboxyltransferase N-terminal spans 30–294 (IMTKCPECKK…PEVGGEADGE (265 aa)). Residues cysteine 34, cysteine 37, cysteine 53, and cysteine 56 each coordinate Zn(2+). A C4-type zinc finger spans residues 34 to 56 (CPECKKIMYTKELQKNLMVCNYC).

It belongs to the AccD/PCCB family. Acetyl-CoA carboxylase is a heterohexamer composed of biotin carboxyl carrier protein (AccB), biotin carboxylase (AccC) and two subunits each of ACCase subunit alpha (AccA) and ACCase subunit beta (AccD). The cofactor is Zn(2+).

It is found in the cytoplasm. The enzyme catalyses N(6)-carboxybiotinyl-L-lysyl-[protein] + acetyl-CoA = N(6)-biotinyl-L-lysyl-[protein] + malonyl-CoA. Its pathway is lipid metabolism; malonyl-CoA biosynthesis; malonyl-CoA from acetyl-CoA: step 1/1. Component of the acetyl coenzyme A carboxylase (ACC) complex. Biotin carboxylase (BC) catalyzes the carboxylation of biotin on its carrier protein (BCCP) and then the CO(2) group is transferred by the transcarboxylase to acetyl-CoA to form malonyl-CoA. This is Acetyl-coenzyme A carboxylase carboxyl transferase subunit beta from Listeria monocytogenes serotype 4a (strain HCC23).